The chain runs to 557 residues: Proline--tRNA ligase (557 aa).

It belongs to the class-II aminoacyl-tRNA synthetase family. ProS type 1 subfamily. Homodimer.

The protein localises to the cytoplasm. It catalyses the reaction tRNA(Pro) + L-proline + ATP = L-prolyl-tRNA(Pro) + AMP + diphosphate. Catalyzes the attachment of proline to tRNA(Pro) in a two-step reaction: proline is first activated by ATP to form Pro-AMP and then transferred to the acceptor end of tRNA(Pro). As ProRS can inadvertently accommodate and process non-cognate amino acids such as alanine and cysteine, to avoid such errors it has two additional distinct editing activities against alanine. One activity is designated as 'pretransfer' editing and involves the tRNA(Pro)-independent hydrolysis of activated Ala-AMP. The other activity is designated 'posttransfer' editing and involves deacylation of mischarged Ala-tRNA(Pro). The misacylated Cys-tRNA(Pro) is not edited by ProRS. This chain is Proline--tRNA ligase, found in Baumannia cicadellinicola subsp. Homalodisca coagulata.